The following is a 59-amino-acid chain: UPF0291 protein CPR_1073 (59 aa).

Residues Met-1 to Arg-30 are disordered.

It belongs to the UPF0291 family.

The protein localises to the cytoplasm. In Clostridium perfringens (strain SM101 / Type A), this protein is UPF0291 protein CPR_1073.